Reading from the N-terminus, the 455-residue chain is MFS-type transporter SLC18B1 (455 aa).

Methionine 1 is modified (N-acetylmethionine). The segment at 1–26 (MDTAGPPAPAGTEGDGPGGSTGETSR) is disordered. Residues 1–32 (MDTAGPPAPAGTEGDGPGGSTGETSRRLSKEQ) are Cytoplasmic-facing. Serine 20 bears the Phosphoserine mark. The helical transmembrane segment at 33-53 (IFVLVSAASMNLGCMMTYSIL) threads the bilayer. At 54–69 (GPFFPKEAEKKGASNT) the chain is on the extracellular side. The helical transmembrane segment at 70–90 (TIGMIFGCYALFELLASLVFG) threads the bilayer. Residues 91–99 (KYLVHIGAK) are Cytoplasmic-facing. A helical membrane pass occupies residues 100–120 (FMFIAGMFVSGGVTILFGVLD). The Extracellular segment spans residues 121–126 (QLPEGP). The helical transmembrane segment at 127–147 (IFIAMCFLVRIVDAIGFGAAI) threads the bilayer. The Cytoplasmic segment spans residues 148–166 (TASSSILAKAFPNNVATVM). A helical transmembrane segment spans residues 167–187 (GSLEVFSGLGLVAGPPLGGLL). Residues 188-194 (YQSFGYE) lie on the Extracellular side of the membrane. Residues 195 to 215 (VPFIFLGCIVLLMIPLNLCIL) traverse the membrane as a helical segment. The Cytoplasmic segment spans residues 216 to 232 (PSYESDAGKQSFWKLVT). A helical transmembrane segment spans residues 233 to 253 (LPKIGLIAFVIISLSSCFGFL). Residues 254–271 (DPTLSLFVMKKFSLSTGY) are Extracellular-facing. A helical transmembrane segment spans residues 272–292 (VGLVFLGLSLSYAISSPLFGL). Residues 293 to 303 (LSDKMPNLRKW) lie on the Cytoplasmic side of the membrane. The helical transmembrane segment at 304-324 (FLVFGNLITAGCYMLLGPIPL) threads the bilayer. Residues 325-330 (LHIKSQ) are Extracellular-facing. The chain crosses the membrane as a helical span at residues 331-351 (LWLLVLVLVINGVSAGMSIIP). The Cytoplasmic portion of the chain corresponds to 352–376 (TFPEMLSCAYANGFEDGISTLGLVS). The helical transmembrane segment at 377–397 (GLFGAMWSVGAFMGPILGGFL) threads the bilayer. The Extracellular portion of the chain corresponds to 398–406 (CEKIGFEWA). A helical transmembrane segment spans residues 407–427 (AAIQGLWTLLSGVAMALFYLW). The Cytoplasmic segment spans residues 428 to 455 (EDSTMRRSKAQNILGTEEEQAALLPNDT).

In terms of tissue distribution, expressed in brain structures, particularly in hippocampus, cortex, and cerebellum (at protein level). Expressed in astrocytes and hippocampal neurons (at protein level). Expressed in peritoneal mast cells.

The protein resides in the cytoplasmic vesicle. It localises to the secretory vesicle membrane. Its subcellular location is the secretory vesicle. The protein localises to the synaptic vesicle membrane. It carries out the reaction spermine(in) + n H(+)(out) = spermine(out) + n H(+)(in). The enzyme catalyses spermidine(in) + n H(+)(out) = spermidine(out) + n H(+)(in). The catalysed reaction is serotonin(in) + n H(+)(out) = serotonin(out) + n H(+)(in). Proton-coupled polyamine antiporter involved in the translocation of polyamines from cytosol into secretory vesicles prior to their release via exocytosis. Uses the electrochemical proton gradient generated by a V-type proton-pumping ATPase to couple the efflux of protons with the uptake of a polyamine molecule. Facilitates vesicular storage of spermine and spermidine in astrocytes with an impact on glutamatergic neuronal transmission and memory formation. Upon antigen stimulation, regulates polyamine accumulation and release in mast cell secretory granules, which in turn potentiates mast cell degranulation and histamine secretion. This Rattus norvegicus (Rat) protein is MFS-type transporter SLC18B1.